Consider the following 211-residue polypeptide: Protein-lysine N-methyltransferase DDB_G0272708 (211 aa).

It belongs to the class I-like SAM-binding methyltransferase superfamily. EFM5 family.

The protein resides in the cytoplasm. S-adenosyl-L-methionine-dependent protein-lysine N-methyltransferase that methylates elongation factor 1-alpha. In Dictyostelium discoideum (Social amoeba), this protein is Protein-lysine N-methyltransferase DDB_G0272708.